The following is a 240-amino-acid chain: Pyridoxine 5'-phosphate synthase (240 aa).

Asn6 provides a ligand contact to 3-amino-2-oxopropyl phosphate. 8 to 9 (DH) lines the 1-deoxy-D-xylulose 5-phosphate pocket. Arg17 is a 3-amino-2-oxopropyl phosphate binding site. Catalysis depends on His42, which acts as the Proton acceptor. Residues Arg44 and His49 each coordinate 1-deoxy-D-xylulose 5-phosphate. The active-site Proton acceptor is the Glu69. Thr99 serves as a coordination point for 1-deoxy-D-xylulose 5-phosphate. The active-site Proton donor is His190. 3-amino-2-oxopropyl phosphate contacts are provided by residues Gly191 and 212 to 213 (GH).

Belongs to the PNP synthase family. As to quaternary structure, homooctamer; tetramer of dimers.

Its subcellular location is the cytoplasm. The enzyme catalyses 3-amino-2-oxopropyl phosphate + 1-deoxy-D-xylulose 5-phosphate = pyridoxine 5'-phosphate + phosphate + 2 H2O + H(+). The protein operates within cofactor biosynthesis; pyridoxine 5'-phosphate biosynthesis; pyridoxine 5'-phosphate from D-erythrose 4-phosphate: step 5/5. Its function is as follows. Catalyzes the complicated ring closure reaction between the two acyclic compounds 1-deoxy-D-xylulose-5-phosphate (DXP) and 3-amino-2-oxopropyl phosphate (1-amino-acetone-3-phosphate or AAP) to form pyridoxine 5'-phosphate (PNP) and inorganic phosphate. In Pseudomonas putida (strain ATCC 700007 / DSM 6899 / JCM 31910 / BCRC 17059 / LMG 24140 / F1), this protein is Pyridoxine 5'-phosphate synthase.